The following is a 238-amino-acid chain: 2,3,4,5-tetrahydropyridine-2,6-dicarboxylate N-acetyltransferase (238 aa).

This sequence belongs to the transferase hexapeptide repeat family. DapH subfamily.

It carries out the reaction (S)-2,3,4,5-tetrahydrodipicolinate + acetyl-CoA + H2O = L-2-acetamido-6-oxoheptanedioate + CoA. It functions in the pathway amino-acid biosynthesis; L-lysine biosynthesis via DAP pathway; LL-2,6-diaminopimelate from (S)-tetrahydrodipicolinate (acetylase route): step 1/3. Catalyzes the transfer of an acetyl group from acetyl-CoA to tetrahydrodipicolinate. The polypeptide is 2,3,4,5-tetrahydropyridine-2,6-dicarboxylate N-acetyltransferase (Thermotoga neapolitana (strain ATCC 49049 / DSM 4359 / NBRC 107923 / NS-E)).